A 216-amino-acid polypeptide reads, in one-letter code: Adenylate kinase (216 aa).

An ATP-binding site is contributed by 10 to 15; sequence GAGKGT. The NMP stretch occupies residues 30–59; sequence STGDIFRANIKEKTPLGIEAKRYIDNGQLV. Residues Thr-31, Arg-36, 57-59, 85-88, and Gln-92 contribute to the AMP site; these read QLV and GFPR. The interval 126–163 is LID; sequence GRRVCTSCGASYHIRFNPPKIEGKCDICDNELIQRKDD. Arg-127 contributes to the ATP binding site. Zn(2+) is bound by residues Cys-130 and Cys-133. 136–137 is an ATP binding site; it reads SY. Residues Cys-150 and Cys-153 each contribute to the Zn(2+) site. Arg-160 and Arg-171 together coordinate AMP. An ATP-binding site is contributed by Glu-199.

Belongs to the adenylate kinase family. Monomer.

The protein localises to the cytoplasm. It carries out the reaction AMP + ATP = 2 ADP. It functions in the pathway purine metabolism; AMP biosynthesis via salvage pathway; AMP from ADP: step 1/1. Catalyzes the reversible transfer of the terminal phosphate group between ATP and AMP. Plays an important role in cellular energy homeostasis and in adenine nucleotide metabolism. The chain is Adenylate kinase from Clostridium botulinum (strain Langeland / NCTC 10281 / Type F).